The chain runs to 304 residues: Tetrahydromethanopterin S-methyltransferase subunit E (304 aa).

6 consecutive transmembrane segments (helical) span residues Pro-3–Ser-23, Pro-86–Val-106, His-131–Tyr-151, Leu-152–Ile-172, Pro-233–Phe-253, and Trp-263–Ile-283.

It belongs to the MtrE family. The complex is composed of 8 subunits; MtrA, MtrB, MtrC, MtrD, MtrE, MtrF, MtrG and MtrH.

It is found in the cell membrane. It carries out the reaction 5-methyl-5,6,7,8-tetrahydromethanopterin + coenzyme M + 2 Na(+)(in) = 5,6,7,8-tetrahydromethanopterin + methyl-coenzyme M + 2 Na(+)(out). The protein operates within one-carbon metabolism; methanogenesis from CO(2); methyl-coenzyme M from 5,10-methylene-5,6,7,8-tetrahydromethanopterin: step 2/2. In terms of biological role, part of a complex that catalyzes the formation of methyl-coenzyme M and tetrahydromethanopterin from coenzyme M and methyl-tetrahydromethanopterin. This is an energy-conserving, sodium-ion translocating step. The protein is Tetrahydromethanopterin S-methyltransferase subunit E of Methanosarcina acetivorans (strain ATCC 35395 / DSM 2834 / JCM 12185 / C2A).